The sequence spans 339 residues: Uracil nucleotide/cysteinyl leukotriene receptor (339 aa).

The Extracellular portion of the chain corresponds to M1–C36. Residue N14 is glycosylated (N-linked (GlcNAc...) asparagine). Residues F37–I57 traverse the membrane as a helical segment. The Cytoplasmic portion of the chain corresponds to W58–T64. A helical transmembrane segment spans residues P65 to P85. Over T86–R105 the chain is Extracellular. A disulfide bridge connects residues C104 and C181. The helical transmembrane segment at L106–S126 threads the bilayer. At A127 to Y147 the chain is on the cytoplasmic side. The chain crosses the membrane as a helical span at residues A148–V168. Residues S169–A195 lie on the Extracellular side of the membrane. N176 carries N-linked (GlcNAc...) asparagine glycosylation. A helical membrane pass occupies residues S196–I216. At R217–K232 the chain is on the cytoplasmic side. The chain crosses the membrane as a helical span at residues A233–I253. The Extracellular segment spans residues H254 to R280. A helical membrane pass occupies residues I281–A301. The Cytoplasmic portion of the chain corresponds to E302–L339.

It belongs to the G-protein coupled receptor 1 family. In terms of tissue distribution, expressed in brain, kidney, and heart. Highest level in brain.

The protein localises to the cell membrane. Functionally, dual specificity receptor for uracil nucleotides and cysteinyl leukotrienes (CysLTs). Signals through G(i) and inhibition of adenylyl cyclase. May mediate brain damage by nucleotides and CysLTs following ischemia. The polypeptide is Uracil nucleotide/cysteinyl leukotriene receptor (Rattus norvegicus (Rat)).